The following is a 214-amino-acid chain: UPF0301 protein blr1492 (214 aa).

The disordered stretch occupies residues 1-22 (MAPTGKRTGESTRSTGPAPPSS).

The protein belongs to the UPF0301 (AlgH) family.

In Bradyrhizobium diazoefficiens (strain JCM 10833 / BCRC 13528 / IAM 13628 / NBRC 14792 / USDA 110), this protein is UPF0301 protein blr1492.